Reading from the N-terminus, the 101-residue chain is Integration host factor subunit alpha (101 aa).

The segment at 49 to 70 is disordered; it reads FGNFQLRDKPQRPGRNPKTGEE.

The protein belongs to the bacterial histone-like protein family. Heterodimer of an alpha and a beta chain.

This protein is one of the two subunits of integration host factor, a specific DNA-binding protein that functions in genetic recombination as well as in transcriptional and translational control. This Nitrosospira multiformis (strain ATCC 25196 / NCIMB 11849 / C 71) protein is Integration host factor subunit alpha.